Here is a 105-residue protein sequence, read N- to C-terminus: Endoribonuclease MazF1 (105 aa).

The protein belongs to the PemK/MazF family. As to quaternary structure, forms a complex with cognate antitoxin MazE1.

Its function is as follows. Toxic component of a type II toxin-antitoxin (TA) system. Acts as an endoribonuclease on single-strand RNA, cleaving between the first and second bases in the sequence UCGCU. Neutralized by coexpression with cognate antitoxin MazE1. The chain is Endoribonuclease MazF1 (mazF1) from Mycobacterium bovis (strain ATCC BAA-935 / AF2122/97).